Consider the following 316-residue polypeptide: ATP synthase gamma chain (316 aa).

This sequence belongs to the ATPase gamma chain family. In terms of assembly, F-type ATPases have 2 components, CF(1) - the catalytic core - and CF(0) - the membrane proton channel. CF(1) has five subunits: alpha(3), beta(3), gamma(1), delta(1), epsilon(1). CF(0) has three main subunits: a, b and c.

The protein resides in the cellular thylakoid membrane. Produces ATP from ADP in the presence of a proton gradient across the membrane. The gamma chain is believed to be important in regulating ATPase activity and the flow of protons through the CF(0) complex. The protein is ATP synthase gamma chain of Prochlorococcus marinus (strain MIT 9313).